A 74-amino-acid chain; its full sequence is Imcroporin (74 aa).

A signal peptide spans 1–22 (MKFQYLLAVFLIVLVVTDHCQA). Lys39 is subject to Lysine amide; partial. A propeptide spanning residues 45 to 74 (QLEARFEPKQRNFRKRELDFEKLFANMPDY) is cleaved from the precursor.

This sequence belongs to the non-disulfide-bridged peptide (NDBP) superfamily. Short antimicrobial peptide (group 4) family. As to expression, expressed by the venom gland.

Its subcellular location is the secreted. It is found in the target cell membrane. Its function is as follows. Has potent antibacterial activity against Gram-positive bacteria M.luteus, B.thuringiensis, S.aureus and B.subtilis, but not Gram-negative bacteria. Shows a weak cytotoxicity effect against mammalian cell lines and relatively low hemolytic activity against human erythrocytes. The chain is Imcroporin from Isometrus maculatus (Lesser brown scorpion).